We begin with the raw amino-acid sequence, 197 residues long: Fucoxanthin-chlorophyll a-c binding protein D, chloroplastic (197 aa).

Residues 1-31 (MKTAVIASLIAGAAAFAPAKNAARTSVATNM) constitute a chloroplast transit peptide. The next 3 helical transmembrane spans lie at 73 to 94 (ISMLAVVGYLVQEAGVRLPGTI), 114 to 133 (PAGGLVQLLFFIGVLESSVM), and 174 to 196 (GRAAQMGILALMVHEQLGVSLLP).

Belongs to the fucoxanthin chlorophyll protein family. The LHC complex of chromophytic algae is composed of fucoxanthin, chlorophyll A and C bound non-covalently by fucoxanthin chlorophyll proteins (FCPs). The ratio of the pigments in LHC; fucoxanthin: chlorophyll C: chlorophyll A; (0.6-1): (0.1-0.3): (1).

It is found in the plastid. Its subcellular location is the chloroplast thylakoid membrane. Functionally, the light-harvesting complex (LHC) functions as a light receptor, it captures and delivers excitation energy to photosystems with which it is closely associated. Energy is transferred from the carotenoid and chlorophyll C (or B) to chlorophyll A and the photosynthetic reaction centers where it is used to synthesize ATP and reducing power. This Phaeodactylum tricornutum (Diatom) protein is Fucoxanthin-chlorophyll a-c binding protein D, chloroplastic (FCPD).